The sequence spans 157 residues: Crossover junction endodeoxyribonuclease RuvC (157 aa).

Catalysis depends on residues D7, E66, and D139. 3 residues coordinate Mg(2+): D7, E66, and D139.

Belongs to the RuvC family. As to quaternary structure, homodimer which binds Holliday junction (HJ) DNA. The HJ becomes 2-fold symmetrical on binding to RuvC with unstacked arms; it has a different conformation from HJ DNA in complex with RuvA. In the full resolvosome a probable DNA-RuvA(4)-RuvB(12)-RuvC(2) complex forms which resolves the HJ. Requires Mg(2+) as cofactor.

The protein localises to the cytoplasm. It catalyses the reaction Endonucleolytic cleavage at a junction such as a reciprocal single-stranded crossover between two homologous DNA duplexes (Holliday junction).. Its function is as follows. The RuvA-RuvB-RuvC complex processes Holliday junction (HJ) DNA during genetic recombination and DNA repair. Endonuclease that resolves HJ intermediates. Cleaves cruciform DNA by making single-stranded nicks across the HJ at symmetrical positions within the homologous arms, yielding a 5'-phosphate and a 3'-hydroxyl group; requires a central core of homology in the junction. The consensus cleavage sequence is 5'-(A/T)TT(C/G)-3'. Cleavage occurs on the 3'-side of the TT dinucleotide at the point of strand exchange. HJ branch migration catalyzed by RuvA-RuvB allows RuvC to scan DNA until it finds its consensus sequence, where it cleaves and resolves the cruciform DNA. This is Crossover junction endodeoxyribonuclease RuvC from Helicobacter acinonychis (strain Sheeba).